Here is a 303-residue protein sequence, read N- to C-terminus: Probable porphobilinogen deaminase (303 aa).

Residue C240 is modified to S-(dipyrrolylmethanemethyl)cysteine.

Belongs to the HMBS family. The cofactor is dipyrromethane.

It carries out the reaction 4 porphobilinogen + H2O = hydroxymethylbilane + 4 NH4(+). Its pathway is porphyrin-containing compound metabolism; protoporphyrin-IX biosynthesis; coproporphyrinogen-III from 5-aminolevulinate: step 2/4. Tetrapolymerization of the monopyrrole PBG into the hydroxymethylbilane pre-uroporphyrinogen in several discrete steps. The sequence is that of Probable porphobilinogen deaminase from Hyperthermus butylicus (strain DSM 5456 / JCM 9403 / PLM1-5).